The sequence spans 496 residues: MSTEHMEELNDQQIVRREKMAALREQGIDPFGKRFERTANSQELKDKYANLDKEQLHDKNETATIAGRLVTKRGKGKVGFAHLQDREGQIQIYVRKDAVGEENYEIFKKADLGDFLGVEGEVMRTDMGELSIKATHITHLSKALRPLPEKFHGLTDVETIYRKRYLDLISNRESFERFVTRSKIISEIRRYLDQKGFLEVETPVLHNEAGGAAARPFITHHNAQNIDMVLRIATELHLKRLIVGGMERVYEIGRIFRNEGMDATHNPEFTSIEVYQAYADFQDIMDLTEGIIQHAAKSVKGDGPVNYQGTEIKINKPFKRVHMVDAIKEITGVDFWQDMTLEEAKAIAAEKKVPVEKHYTEVGHIINAFFEEFVEETLIQPTFVYGHPVAVSPLAKKNPEDQRFTDRFELFIMTKEYGNAFTELNDPIDQLSRFEAQAKAKELGDDEATGIDYDYIEALEYGMPPTGGLGIGIDRLCMLLTDTTTIRDVLLFPTMK.

E409 and E416 together coordinate Mg(2+).

It belongs to the class-II aminoacyl-tRNA synthetase family. In terms of assembly, homodimer. Requires Mg(2+) as cofactor.

The protein resides in the cytoplasm. It carries out the reaction tRNA(Lys) + L-lysine + ATP = L-lysyl-tRNA(Lys) + AMP + diphosphate. This is Lysine--tRNA ligase from Streptococcus pneumoniae (strain CGSP14).